Here is a 130-residue protein sequence, read N- to C-terminus: Small ribosomal subunit protein uS8 (130 aa).

It belongs to the universal ribosomal protein uS8 family. As to quaternary structure, part of the 30S ribosomal subunit. Contacts proteins S5 and S12.

One of the primary rRNA binding proteins, it binds directly to 16S rRNA central domain where it helps coordinate assembly of the platform of the 30S subunit. In Aliivibrio fischeri (strain MJ11) (Vibrio fischeri), this protein is Small ribosomal subunit protein uS8.